Reading from the N-terminus, the 264-residue chain is Apolipoprotein A-I (264 aa).

Positions 1-18 are cleaved as a signal peptide; that stretch reads MKTVVLAVAVLFLTGSQA. Repeat copies occupy residues 67 to 88 and 89 to 110. Residues 67 to 264 form a 10 X approximate tandem repeats region; that stretch reads LNLLENWDTL…EEASKKLNAQ (198 aa). Residue Met109 is modified to Methionine sulfoxide. Residues 111–121 form a 3; half-length repeat; it reads KDLEEVKAKVQ. Tandem repeats lie at residues 122–143, 144–165, 166–187, 188–207, and 208–229. A Methionine sulfoxide modification is found at Met193. The 9; half-length repeat unit spans residues 230 to 240; the sequence is PALEDLRQGLM. Met240 carries the methionine sulfoxide modification. The stretch at 241–264 is repeat 10; sequence PVFESFKTRIMSMVEEASKKLNAQ.

The protein belongs to the apolipoprotein A1/A4/E family. As to quaternary structure, homodimer. Interacts with APOA1BP and CLU. Component of a sperm activating protein complex (SPAP), consisting of APOA1, an immunoglobulin heavy chain, an immunoglobulin light chain and albumin. Interacts with NDRG1. Interacts with SCGB3A2. Interacts with NAXE and YJEFN3. Post-translationally, glycosylated. Palmitoylated. In terms of processing, phosphorylation sites are present in the extracellular medium. As to expression, major protein of plasma HDL, also found in chylomicrons.

It localises to the secreted. Participates in the reverse transport of cholesterol from tissues to the liver for excretion by promoting cholesterol efflux from tissues and by acting as a cofactor for the lecithin cholesterol acyltransferase (LCAT). As part of the SPAP complex, activates spermatozoa motility. The sequence is that of Apolipoprotein A-I (APOAI) from Mesocricetus auratus (Golden hamster).